We begin with the raw amino-acid sequence, 93 residues long: PqqA binding protein (93 aa).

Belongs to the PqqD family. In terms of assembly, monomer. Interacts with PqqE.

It functions in the pathway cofactor biosynthesis; pyrroloquinoline quinone biosynthesis. Functions as a PqqA binding protein and presents PqqA to PqqE, in the pyrroloquinoline quinone (PQQ) biosynthetic pathway. The polypeptide is PqqA binding protein (Methylococcus capsulatus (strain ATCC 33009 / NCIMB 11132 / Bath)).